The chain runs to 118 residues: Probable non-functional immunoglobulin lambda variable 2-33 (118 aa).

The N-terminal stretch at 1-19 (MAWALLLLTLLTQGTGSWA) is a signal peptide. The segment at 20–44 (QSALTQPPFVSGAPGQSVTISCTGT) is framework-1. One can recognise an Ig-like domain in the interval 34–118 (GQSVTISCTG…CSLYSSSYTF (85 aa)). Cys-41 and Cys-109 form a disulfide bridge. Residues 45–53 (SSDVGDYDH) are complementarity-determining-1. A framework-2 region spans residues 54-70 (VFWYQKRLSTTSRLLIY). Residues 71-73 (NVN) form a complementarity-determining-2 region. The framework-3 stretch occupies residues 74–109 (TRPSGISDLFSGSKSGNMASLTISGLKSEVEANYHC). The tract at residues 110-118 (SLYSSSYTF) is complementarity-determining-3.

As to quaternary structure, immunoglobulins are composed of two identical heavy chains and two identical light chains; disulfide-linked.

It localises to the secreted. The protein resides in the cell membrane. In terms of biological role, probable non-functional open reading frame (ORF) of V region of the variable domain of immunoglobulin light chains. Non-functional ORF generally cannot participate in the synthesis of a productive immunoglobulin chain due to altered V-(D)-J or switch recombination and/or splicing site (at mRNA level) and/or conserved amino acid change (protein level). Immunoglobulins, also known as antibodies, are membrane-bound or secreted glycoproteins produced by B lymphocytes. In the recognition phase of humoral immunity, the membrane-bound immunoglobulins serve as receptors which, upon binding of a specific antigen, trigger the clonal expansion and differentiation of B lymphocytes into immunoglobulins-secreting plasma cells. Secreted immunoglobulins mediate the effector phase of humoral immunity, which results in the elimination of bound antigens. The antigen binding site is formed by the variable domain of one heavy chain, together with that of its associated light chain. Thus, each immunoglobulin has two antigen binding sites with remarkable affinity for a particular antigen. The variable domains are assembled by a process called V-(D)-J rearrangement and can then be subjected to somatic hypermutations which, after exposure to antigen and selection, allow affinity maturation for a particular antigen. The sequence is that of Probable non-functional immunoglobulin lambda variable 2-33 from Homo sapiens (Human).